The chain runs to 213 residues: MTEAATQPALVIPQLIVGLGNPESKYDQTRHNIGFAAVEALSRSWRISLAENRKFQGEYGEGMAPGGGKIRLLKPLTYMNRSGQSIQAVTSWYKLPPESVLIIYDDMDLPLGKTRLRLSGSAGGHNGMKSAIAHLSTQNFPRLRIGIGKPKGAADNDDSNTVSHVLGRFSSAENQQMSLVLQFVVECIELSLKQGVEKAMNVCNSRTINNSES.

Tyr-26 provides a ligand contact to tRNA. Catalysis depends on His-31, which acts as the Proton acceptor. TRNA is bound by residues Tyr-78, Asn-80, and Asn-126.

Belongs to the PTH family. In terms of assembly, monomer.

The protein localises to the cytoplasm. It catalyses the reaction an N-acyl-L-alpha-aminoacyl-tRNA + H2O = an N-acyl-L-amino acid + a tRNA + H(+). Its function is as follows. Hydrolyzes ribosome-free peptidyl-tRNAs (with 1 or more amino acids incorporated), which drop off the ribosome during protein synthesis, or as a result of ribosome stalling. Catalyzes the release of premature peptidyl moieties from peptidyl-tRNA molecules trapped in stalled 50S ribosomal subunits, and thus maintains levels of free tRNAs and 50S ribosomes. The sequence is that of Peptidyl-tRNA hydrolase from Nostoc punctiforme (strain ATCC 29133 / PCC 73102).